A 517-amino-acid polypeptide reads, in one-letter code: RNA-binding region-containing protein 3 (517 aa).

The tract at residues 1 to 26 (MAAPEQPLAISRGCTSSSSLSPPRGD) is disordered. Ser21 carries the post-translational modification Phosphoserine. An RRM 1 domain is found at 27–102 (RTLLVRHLPA…HTLVVEFAKE (76 aa)). 2 disordered regions span residues 106-130 (VHSP…DDKE) and 213-254 (MPLH…DEDR). Ser108 carries the post-translational modification Phosphoserine. Residues 115–130 (SEKKKRSDDPVEDDKE) show a composition bias toward basic and acidic residues. A compositionally biased stretch (pro residues) spans 217-230 (APLPPTSPQPPEEP). The segment covering 231-252 (PLPEEDEELSSEESEYESTDDE) has biased composition (acidic residues). An RRM 2 domain is found at 420 to 503 (CRIYVKNLAK…KPMVVQFARS (84 aa)).

In terms of assembly, component of the U11/U12 snRNPs that are part of the U12-type spliceosome. Found in a complex with m(7)G-capped U12 snRNA. Interacts with PDCD7.

It is found in the nucleus. Functionally, participates in pre-mRNA U12-dependent splicing, performed by the minor spliceosome which removes U12-type introns. U12-type introns comprises less than 1% of all non-coding sequences. Binds to the 3'-stem-loop of m(7)G-capped U12 snRNA. This chain is RNA-binding region-containing protein 3 (RNPC3), found in Pongo abelii (Sumatran orangutan).